Here is a 273-residue protein sequence, read N- to C-terminus: Exosome complex component MTR3 (273 aa).

A disordered region spans residues 1–36; that stretch reads MPGDHRRIRGPEESQPPQLYAAEDDETPAARDPTRL.

It belongs to the RNase PH family. Component of the RNA exosome core complex (Exo-9), composed of EXOSC1, EXOSC2, EXOSC3, EXOSC4, EXOSC5, EXOSC6, EXOSC7, EXOSC8 and EXOSC9; within the complex interacts with EXOSC1, EXOSC7 and EXOSC8. The catalytically inactive RNA exosome core complex (Exo-9) associates with the catalytic subunit EXOSC10/RRP6. Exo-9 may associate with DIS3 to form the nucleolar exosome complex, or DIS3L to form the cytoplasmic exosome complex. Exo-9 is formed by a hexameric base ring consisting of the heterodimers EXOSC4-EXOSC9, EXOSC5-EXOSC8 and EXOSC6-EXOSC7, and a cap ring consisting of EXOSC1, EXOSC2 and EXOSC3. The RNA exosome complex associates with cofactors EXOSC10/RRP6, C1D/RRP47, MPHOSPH6/MPP6 and MTREX/MTR4.

It localises to the cytoplasm. It is found in the nucleus. The protein localises to the nucleolus. Non-catalytic component of the RNA exosome complex which has 3'-&gt;5' exoribonuclease activity and participates in a multitude of cellular RNA processing and degradation events. In the nucleus, the RNA exosome complex is involved in proper maturation of stable RNA species such as rRNA, snRNA and snoRNA, in the elimination of RNA processing by-products and non-coding 'pervasive' transcripts, such as antisense RNA species and promoter-upstream transcripts (PROMPTs), and of mRNAs with processing defects, thereby limiting or excluding their export to the cytoplasm. The RNA exosome may be involved in Ig class switch recombination (CSR) and/or Ig variable region somatic hypermutation (SHM) by targeting AICDA deamination activity to transcribed dsDNA substrates. In the cytoplasm, the RNA exosome complex is involved in general mRNA turnover and specifically degrades inherently unstable mRNAs containing AU-rich elements (AREs) within their 3' untranslated regions, and in RNA surveillance pathways, preventing translation of aberrant mRNAs. It seems to be involved in degradation of histone mRNA. The catalytic inactive RNA exosome core complex of 9 subunits (Exo-9) is proposed to play a pivotal role in the binding and presentation of RNA for ribonucleolysis, and to serve as a scaffold for the association with catalytic subunits and accessory proteins or complexes. The chain is Exosome complex component MTR3 (Exosc6) from Mus musculus (Mouse).